Here is a 327-residue protein sequence, read N- to C-terminus: G-protein coupled receptor 55 (327 aa).

Residues 1-20 (MSQPERDNCSFDSVDKLTRT) lie on the Extracellular side of the membrane. A glycan (N-linked (GlcNAc...) asparagine) is linked at asparagine 8. Residues 21-41 (LQLAVHIPTFLLGLVLNLLAI) form a helical membrane-spanning segment. Residues 42 to 57 (RGFSAFLKKRKLDYIA) are Cytoplasmic-facing. Residues 58 to 78 (TSIYMINLAVFDLLLVLSLPF) form a helical membrane-spanning segment. The Extracellular segment spans residues 79 to 93 (KMVLPQVESPLPSFC). Residues 94–114 (TLVECLYFISMYGSVFTICFI) form a helical membrane-spanning segment. The Cytoplasmic portion of the chain corresponds to 115–136 (SLDRFLAIQYPILASHLRSPRK). A helical transmembrane segment spans residues 137-157 (TFGICCIIWMLVWIGSIPIYT). Over 158-179 (FHREVERYKCFHNMSDVTWSAS) the chain is Extracellular. N-linked (GlcNAc...) asparagine glycosylation occurs at asparagine 170. A helical transmembrane segment spans residues 180 to 200 (VFFPLEIFGFLLPMGIMGFCS). At 201–239 (YRSIHILLRRPDSTEDWVQQRDTKGWVQKRACIWTIATN) the chain is on the cytoplasmic side. The helical transmembrane segment at 240–260 (LVIFVVSFLPVHLGFFLQYLV) threads the bilayer. The Extracellular segment spans residues 261–279 (RNRFILDCRMKQGISLFLQ). The chain crosses the membrane as a helical span at residues 280–300 (LSLCFSNINCCLDVFCYYFVI). Residues 301–327 (KEFRMRIKAHRPSTIKLVNQDTMVSRG) are Cytoplasmic-facing.

The protein belongs to the G-protein coupled receptor 1 family. In terms of tissue distribution, highly expressed in splenic plasma cells.

The protein localises to the cell membrane. Functionally, G-protein coupled receptor that binds to several ligands including 2-arachidonoyl lysophosphatidylinositol or lysophosphatidylglucoside with high affinity, leading to rapid and transient activation of numerous intracellular signaling pathways. Induces the Ca(2+) release from intracellular stores via ERK, the heterotrimeric G protein GNA13 and RHOA leading to morphological changes including cell rounding and stress fiber formation. In macrophages, acts downstream of lysophosphatidylglucoside to inhibit the translocation of the phospholipid-transporting ABCA1 to plasma membrane and subsequent cholesterol efflux leading to lipid accumulation and foam cell formation. May be involved in hyperalgesia associated with inflammatory and neuropathic pain. In Mus musculus (Mouse), this protein is G-protein coupled receptor 55 (Gpr55).